Here is a 729-residue protein sequence, read N- to C-terminus: MSWFADLAGRAEDLLNRVDQGAATALRKENTSNIFYSKNTDYPELQQQNTDSNYQTGQKANYISSAADNIRHQKATILAGTANVKVGSRTVGDATHPTEHASAPRPSSQFVRRKKSEPDDELLFDFLNSSQKEPTGRVEVKKEKGRAPVSPSSPSGVSSVNTSVTTTKAMGGNAGSQSPGVNSSDSVPEVHKEPSEESTAPSATSEEHSSTPSDGSSRSQELSNLRLENQLLRNEVQSLNQEMASLLQRSKETQEELNKARVRVEKWNVDNSKSDRITRELRAQVDDLTEAVAAKDSQLAVLKVRLQEADQVLSSRTEALEALRSEKSRIMQDHKEGSSLQNQALQTLQERLHEADATLKREQESYKQMQSEFAARLNKMEVDRQNLAEAVTLAERKYSEEKKKVDELQQQVKLHRASLESAKQELVDYKQKATRILQSKEKLINSLKEGSSFEGLESSTASSMELEELRHEKEMQKEEIQKLMGQMHQLRSELQDMEAQQVSEAESAREQLQDLQDQIAKQRTSKQELETELERMKQEFRYMEEDLHRTKNTLQSRIKDREEEIQKLRNQLTNKTLSNSSQSELESRLHQLTETLIQKQTMLESLSTEKNSLVFQLERLEQQVHSASSGPNSGSAINMSGVDSGEGTRLRNVPVLFNDTETNLAGMYGKVRKAASSIDQFSIRLGIFLRRYPIARVFVIIYMALLHLWVMIVLLTYSPEMHHDQPYGK.

Serine 2 carries the N-acetylserine modification. The Cytoplasmic segment spans residues 2 to 696 (SWFADLAGRA…IFLRRYPIAR (695 aa)). Arginine 27 and arginine 89 each carry dimethylated arginine. Disordered stretches follow at residues 89 to 222 (RTVG…SQEL) and 626 to 645 (SASSGPNSGSAINMSGVDSG). Phosphoserine is present on serine 116. The segment covering 134 to 146 (PTGRVEVKKEKGR) has biased composition (basic and acidic residues). The span at 148 to 167 (PVSPSSPSGVSSVNTSVTTT) shows a compositional bias: low complexity. 2 stretches are compositionally biased toward polar residues: residues 175-186 (GSQSPGVNSSDS) and 626-638 (SASSGPNSGSAIN). Residues 215–629 (GSSRSQELSN…LEQQVHSASS (415 aa)) adopt a coiled-coil conformation. A helical; Anchor for type IV membrane protein transmembrane segment spans residues 697–717 (VFVIIYMALLHLWVMIVLLTY). Topologically, residues 718 to 729 (SPEMHHDQPYGK) are lumenal.

Homodimer. Interacts with RAB1A that has been activated by GTP-binding. Interacts with isoform CASP of CUX1. Highly phosphorylated during mitosis. Phosphorylation is barely detectable during interphase.

Its subcellular location is the golgi apparatus membrane. In terms of biological role, involved in maintaining Golgi structure. Stimulates the formation of Golgi stacks and ribbons. Involved in intra-Golgi retrograde transport. In Mus musculus (Mouse), this protein is Golgin subfamily A member 5 (Golga5).